The sequence spans 1670 residues: Collagen alpha-3(IV) chain (1670 aa).

A signal peptide spans 1 to 28 (MSARTAPRPQVLLLPLLLVLLAAAPAAS). The 7S domain stretch occupies residues 29 to 42 (KGCVCKDKGQCFCD). The segment at 43–1438 (GAKGEKGEKG…KGKRGDSGSP (1396 aa)) is triple-helical region. 3 disordered regions span residues 49–78 (GEKG…QGPK), 167–469 (LDAK…DGPK), and 502–1442 (GRQG…ATWT). Residues 176 to 200 (PGAPGPQGLPGPPGFPGPVGPPGPP) show a composition bias toward pro residues. Over residues 202–212 (FFGFPGAMGPR) the composition is skewed to low complexity. Residues 217–231 (HMGERVIGHKGERGV) show a composition bias toward basic and acidic residues. Low complexity predominate over residues 242 to 251 (GTVIVTLTGP). Asparagine 253 carries an N-linked (GlcNAc...) asparagine glycan. Residues 253 to 266 (NRTDLKGEKGDKGA) show a composition bias toward basic and acidic residues. Low complexity predominate over residues 382 to 394 (SPGSSRPGLRGAP). Over residues 402–411 (SKGERGRPGK) the composition is skewed to basic and acidic residues. Over residues 415–428 (GTPGSPGCAGSPGL) the composition is skewed to low complexity. 3 stretches are compositionally biased toward pro residues: residues 429-438 (PGSPGPPGPP), 598-618 (PGDP…PPGY), and 654-675 (VPGP…PPGI). Residues 791-793 (RGD) carry the Cell attachment site motif. The segment covering 900 to 909 (IGPPGPPGNP) has biased composition (pro residues). Over residues 974–987 (VPGMPGLKGLKGLP) the composition is skewed to low complexity. The Cell attachment site signature appears at 996–998 (RGD). Low complexity-rich tracts occupy residues 1013-1025 (IPGS…MPGS), 1094-1105 (LGPAGPEGAPGS), and 1118-1133 (HGDL…LGPP). Positions 1135–1148 (IRGPPGLPGFPGSP) are enriched in pro residues. The short motif at 1154–1156 (RGD) is the Cell attachment site element. Low complexity-rich tracts occupy residues 1230 to 1250 (PGAI…RGSP) and 1290 to 1299 (PPGRLGAPGT). Residues 1306–1308 (RGD) carry the Cell attachment site motif. Residues 1332–1341 (PPGPIGPKGP) are compositionally biased toward pro residues. Short sequence motifs (cell attachment site) lie at residues 1345-1347 (RGD) and 1432-1434 (RGD). The segment at 1427 to 1444 (GLKGKRGDSGSPATWTTR) is epitope recognized by Goodpasture antibodies. The 225-residue stretch at 1445 to 1669 (GFVFTRHSQT…SRCQVCMKKR (225 aa)) folds into the Collagen IV NC1 domain. 6 cysteine pairs are disulfide-bonded: cysteine 1460–cysteine 1551, cysteine 1493–cysteine 1548, cysteine 1505–cysteine 1511, cysteine 1570–cysteine 1665, cysteine 1604–cysteine 1662, and cysteine 1616–cysteine 1622. The interval 1479–1557 (NQRAHGQDLG…CTVCEGPAIA (79 aa)) is required for the anti-angiogenic activity of tumstatin. Methionine 1533 participates in a covalent cross-link: S-Lysyl-methionine sulfilimine (Met-Lys) (interchain with K-1651). The segment at 1610–1628 (ASPFLECHGRGTCNYYSNS) is required for the anti-tumor cell activity of tumstatin. Residue lysine 1651 forms an S-Lysyl-methionine sulfilimine (Lys-Met) (interchain with M-1533) linkage.

This sequence belongs to the type IV collagen family. As to quaternary structure, there are six type IV collagen isoforms, alpha 1(IV)-alpha 6(IV), each of which can form a triple helix structure with 2 other chains to generate type IV collagen network. The alpha 3(IV) chain forms a triple helical protomer with alpha 4(IV) and alpha 5(IV); this triple helical structure dimerizes through NC1-NC1 domain interactions such that the alpha 3(IV), alpha 4(IV) and alpha 5(IV) chains of one protomer connect with the alpha 5(IV), alpha 4(IV) and alpha 3(IV) chains of the opposite promoter, respectively. Interacts with ITGB3. Associates with LAMB2 at the neuromuscular junction and in GBM. In terms of processing, prolines at the third position of the tripeptide repeating unit (G-X-Y) are hydroxylated in some or all of the chains. Post-translationally, isoform 2 contains an additional N-linked glycosylation site. Type IV collagens contain numerous cysteine residues which are involved in inter- and intramolecular disulfide bonding. 12 of these, located in the NC1 domain, are conserved in all known type IV collagens. In terms of processing, the trimeric structure of the NC1 domains is stabilized by covalent bonds between Lys and Met residues. Post-translationally, phosphorylated. Thought to be phosphorylated by CERT, but CERT does not have kinase activity. As to expression, alpha 3 and alpha 4 type IV collagens are colocalized and present in kidney, eye, basement membranes of lens capsule, cochlea, lung, skeletal muscle, aorta, synaptic fibers, fetal kidney and fetal lung. PubMed:8083201 reports similar levels of expression of alpha 3 and alpha 4 type IV collagens in kidney, but PubMed:7523402 reports that in kidney levels of alpha 3 type IV collagen are significantly lower than those of alpha 4 type IV collagen. According to PubMed:8083201, alpha 3 type IV collagen is not detected in heart, brain, placenta, liver, pancreas, extrasynaptic muscle fibers, endoneurial and perineurial nerves, fetal brain, fetal heart and fetal liver. According to PubMed:7523402, alpha 3 type IV collagen is strongly expressed in pancreas, neuroretina and calvaria and not expressed in adrenal, ileum and skin. Isoform 1 and isoform 3 are strongly expressed in kidney, lung, suprarenal capsule, muscle and spleen, in each of these tissues isoform 1 is more abundant than isoform 3. Isoform 1 and isoform 3 are expressed at low levels in artery, fat, pericardium and peripherical nerve, but not in placenta, mesangium, skin, pleura and cultured umbilical endothelial cells.

Its subcellular location is the secreted. It localises to the extracellular space. It is found in the extracellular matrix. The protein resides in the basement membrane. In terms of biological role, type IV collagen is the major structural component of glomerular basement membranes (GBM), forming a 'chicken-wire' meshwork together with laminins, proteoglycans and entactin/nidogen. Functionally, tumstatin, a cleavage fragment corresponding to the collagen alpha 3(IV) NC1 domain, possesses both anti-angiogenic and anti-tumor cell activity; these two anti-tumor properties may be regulated via RGD-independent ITGB3-mediated mechanisms. This Homo sapiens (Human) protein is Collagen alpha-3(IV) chain (COL4A3).